The sequence spans 273 residues: Putative phosphoenolpyruvate synthase regulatory protein (273 aa).

An ADP-binding site is contributed by 153-160; the sequence is AVSRAGKT.

The protein belongs to the pyruvate, phosphate/water dikinase regulatory protein family. PSRP subfamily.

It carries out the reaction [pyruvate, water dikinase] + ADP = [pyruvate, water dikinase]-phosphate + AMP + H(+). The enzyme catalyses [pyruvate, water dikinase]-phosphate + phosphate + H(+) = [pyruvate, water dikinase] + diphosphate. Functionally, bifunctional serine/threonine kinase and phosphorylase involved in the regulation of the phosphoenolpyruvate synthase (PEPS) by catalyzing its phosphorylation/dephosphorylation. The polypeptide is Putative phosphoenolpyruvate synthase regulatory protein (Xanthomonas axonopodis pv. citri (strain 306)).